We begin with the raw amino-acid sequence, 522 residues long: Glucans biosynthesis protein G (522 aa).

Positions 1–33 (MLVNILSKKPRAASVRWLGATVLFTLLTSPAWA) are cleaved as a signal peptide.

Belongs to the OpgD/OpgG family.

It is found in the periplasm. It participates in glycan metabolism; osmoregulated periplasmic glucan (OPG) biosynthesis. In terms of biological role, involved in the biosynthesis of osmoregulated periplasmic glucans (OPGs). The sequence is that of Glucans biosynthesis protein G from Serratia proteamaculans (strain 568).